The chain runs to 411 residues: ATPase GET3B (411 aa).

The transit peptide at 1 to 67 directs the protein to the chloroplast; the sequence is MATLSSYLLS…RRRNSLQVKS (67 aa). 95–102 serves as a coordination point for ATP; it reads KGGVGKTS. Residue Asp-124 is part of the active site. An ATP-binding site is contributed by Asn-348.

This sequence belongs to the arsA ATPase family.

Its subcellular location is the plastid. The protein resides in the chloroplast stroma. The catalysed reaction is ATP + H2O = ADP + phosphate + H(+). The protein is ATPase GET3B of Arabidopsis thaliana (Mouse-ear cress).